A 239-amino-acid polypeptide reads, in one-letter code: MNIEQFQSMLEEKGIPLSSRQLEQFEIYFETLVEWNEKMNLTAITEKEEVYLKHFFDSITAAFYYDFSKPFSICDVGAGAGFPSIPLKICFPHLKVTIVDSLQKRINFLNHLAQKLELSDVAFCHDRAETFGKKEGVREAYDIVMARAVARLSVLSELCLPLVKVGGTFIAMKGAAANEEIENGKYALEVLGGDLKEMSTFQLPFEESERNILLIEKKRKTPKKYPRKPGTPNKLPIEK.

Residues G77, F82, 128-129 (AE), and R147 each bind S-adenosyl-L-methionine.

It belongs to the methyltransferase superfamily. RNA methyltransferase RsmG family.

The protein localises to the cytoplasm. Specifically methylates the N7 position of guanine in position 535 of 16S rRNA. The chain is Ribosomal RNA small subunit methyltransferase G from Bacillus cereus (strain AH187).